Here is a 445-residue protein sequence, read N- to C-terminus: Glutamate--tRNA ligase 1 (445 aa).

Residues 10–20 carry the 'HIGH' region motif; it reads PSPTGMLHVGN. The 'KMSKS' region signature appears at 240–244; that stretch reads KISKR. Lys243 contacts ATP.

It belongs to the class-I aminoacyl-tRNA synthetase family. Glutamate--tRNA ligase type 1 subfamily. Monomer.

It is found in the cytoplasm. It catalyses the reaction tRNA(Glu) + L-glutamate + ATP = L-glutamyl-tRNA(Glu) + AMP + diphosphate. Functionally, catalyzes the attachment of glutamate to tRNA(Glu) in a two-step reaction: glutamate is first activated by ATP to form Glu-AMP and then transferred to the acceptor end of tRNA(Glu). This Rickettsia bellii (strain OSU 85-389) protein is Glutamate--tRNA ligase 1.